A 282-amino-acid chain; its full sequence is Peptidoglycan-recognition protein LD (282 aa).

A disordered region spans residues 1–29 (MDSSHIAVRVARRSPSPAAVSQSSYGSLG). Residues 1 to 88 (MDSSHIAVRV…RRNPTLHEDC (88 aa)) are Cytoplasmic-facing. Residues 89–111 (FNWRSVGLLVMCASALALAAYLL) form a helical membrane-spanning segment. Residues 112 to 282 (WRQTQTPDFG…PHYASHQTSK (171 aa)) are Extracellular-facing. A disulfide bridge links Cys162 with Cys166. N-linked (GlcNAc...) asparagine glycosylation occurs at Asn222.

The protein belongs to the N-acetylmuramoyl-L-alanine amidase 2 family. As to expression, expressed in uninduced hemocytes and mbn-2 cells.

It localises to the cell membrane. Peptidoglycan-recognition protein probably involved in innate immunity by binding to peptidoglycans (PGN) of bacteria and activating the immune response. The sequence is that of Peptidoglycan-recognition protein LD (PGRP-LD) from Drosophila melanogaster (Fruit fly).